Consider the following 249-residue polypeptide: Mannose-binding protein C (249 aa).

The first 20 residues, 1 to 20 (MSLFTSLPFLLLTAVTASCA), serve as a signal peptide directing secretion. A Collagen-like domain is found at 43–101 (GINGIPGKDGRDGAKGEKGEPGQGLRGSQGPPGKMGPQGTPGIPGIPGPIGQKGDPGEN). The disordered stretch occupies residues 43–103 (GINGIPGKDG…QKGDPGENMG (61 aa)). Pro-48 is modified (4-hydroxyproline). Positions 50-62 (KDGRDGAKGEKGE) are enriched in basic and acidic residues. A 4-hydroxyproline mark is found at Pro-63, Pro-74, Pro-83, and Pro-86. Over residues 79 to 95 (PQGTPGIPGIPGPIGQK) the composition is skewed to low complexity. Positions 113–131 (RATLQSELNQIKNWLIFSL) form a coiled coil. The region spanning 135–246 (VGKKAFFTNG…CSASFLTVCE (112 aa)) is the C-type lectin domain. Disulfide bonds link Cys-156/Cys-245 and Cys-223/Cys-237.

As to quaternary structure, oligomeric complex of 3 or more homotrimers. Interacts with MASP1 and MASP2. Interacts with MEP1A and MEP1B and may inhibit their catalytic activity. Post-translationally, hydroxylation on proline residues within the sequence motif, GXPG, is most likely to be 4-hydroxy as this fits the requirement for 4-hydroxylation in vertebrates.

It is found in the secreted. Functionally, calcium-dependent lectin involved in innate immune defense. Binds mannose, fucose and N-acetylglucosamine on different microorganisms and activates the lectin complement pathway. Binds to late apoptotic cells, as well as to apoptotic blebs and to necrotic cells, but not to early apoptotic cells, facilitating their uptake by macrophages. The protein is Mannose-binding protein C (MBL) of Bos taurus (Bovine).